The primary structure comprises 243 residues: Pyridoxine 5'-phosphate synthase (243 aa).

Residue N7 coordinates 3-amino-2-oxopropyl phosphate. Position 9 to 10 (9 to 10 (DH)) interacts with 1-deoxy-D-xylulose 5-phosphate. Residue R18 participates in 3-amino-2-oxopropyl phosphate binding. H43 serves as the catalytic Proton acceptor. R45 and H50 together coordinate 1-deoxy-D-xylulose 5-phosphate. Catalysis depends on E70, which acts as the Proton acceptor. T100 serves as a coordination point for 1-deoxy-D-xylulose 5-phosphate. The Proton donor role is filled by H190. 3-amino-2-oxopropyl phosphate contacts are provided by residues G191 and 212–213 (GH).

Belongs to the PNP synthase family. Homooctamer; tetramer of dimers.

Its subcellular location is the cytoplasm. It catalyses the reaction 3-amino-2-oxopropyl phosphate + 1-deoxy-D-xylulose 5-phosphate = pyridoxine 5'-phosphate + phosphate + 2 H2O + H(+). Its pathway is cofactor biosynthesis; pyridoxine 5'-phosphate biosynthesis; pyridoxine 5'-phosphate from D-erythrose 4-phosphate: step 5/5. Functionally, catalyzes the complicated ring closure reaction between the two acyclic compounds 1-deoxy-D-xylulose-5-phosphate (DXP) and 3-amino-2-oxopropyl phosphate (1-amino-acetone-3-phosphate or AAP) to form pyridoxine 5'-phosphate (PNP) and inorganic phosphate. The sequence is that of Pyridoxine 5'-phosphate synthase from Prochlorococcus marinus (strain MIT 9211).